A 40-amino-acid polypeptide reads, in one-letter code: Photosystem II reaction center protein J (40 aa).

A helical transmembrane segment spans residues 8–28; the sequence is IPLWIIGTVTGILVIGLIGIF.

Belongs to the PsbJ family. As to quaternary structure, PSII is composed of 1 copy each of membrane proteins PsbA, PsbB, PsbC, PsbD, PsbE, PsbF, PsbH, PsbI, PsbJ, PsbK, PsbL, PsbM, PsbT, PsbX, PsbY, PsbZ, Psb30/Ycf12, at least 3 peripheral proteins of the oxygen-evolving complex and a large number of cofactors. It forms dimeric complexes.

It is found in the plastid. Its subcellular location is the chloroplast thylakoid membrane. Functionally, one of the components of the core complex of photosystem II (PSII). PSII is a light-driven water:plastoquinone oxidoreductase that uses light energy to abstract electrons from H(2)O, generating O(2) and a proton gradient subsequently used for ATP formation. It consists of a core antenna complex that captures photons, and an electron transfer chain that converts photonic excitation into a charge separation. The protein is Photosystem II reaction center protein J of Eucalyptus globulus subsp. globulus (Tasmanian blue gum).